A 424-amino-acid chain; its full sequence is Putative polyketide beta-ketoacyl synthase 2 (424 aa).

Positions 13 to 416 (SRRAVVTGLG…GSNSALVLRR (404 aa)) constitute a Ketosynthase family 3 (KS3) domain.

The protein belongs to the thiolase-like superfamily. Beta-ketoacyl-ACP synthases family.

Involved in developmentally regulated synthesis of a compound biosynthetically related to polyketide antibiotics which is essential for spore color in Streptomyces coelicolor. This chain is Putative polyketide beta-ketoacyl synthase 2, found in Streptomyces coelicolor (strain ATCC BAA-471 / A3(2) / M145).